Consider the following 579-residue polypeptide: Laccase-4 (579 aa).

The first 28 residues, 1–28 (MTMAISSALPSPLLLAASLLLLIVQAQG), serve as a signal peptide directing secretion. Plastocyanin-like domains follow at residues 36-152 (NVQM…PKLG) and 162-316 (KEVP…YENP). 2 N-linked (GlcNAc...) asparagine glycosylation sites follow: asparagine 41 and asparagine 82. Cu cation contacts are provided by histidine 86 and histidine 88. N-linked (GlcNAc...) asparagine glycosylation occurs at asparagine 118. Histidine 131 and histidine 133 together coordinate Cu cation. N-linked (GlcNAc...) asparagine glycans are attached at residues asparagine 191, asparagine 207, asparagine 243, asparagine 304, asparagine 340, asparagine 347, asparagine 386, asparagine 393, asparagine 403, asparagine 439, asparagine 446, and asparagine 462. The Plastocyanin-like 3 domain occupies 429 to 563 (DFPVAPLSPF…RMAWLVLDGS (135 aa)). Cu cation is bound by residues histidine 480, histidine 483, histidine 485, histidine 542, cysteine 543, histidine 544, and histidine 548.

This sequence belongs to the multicopper oxidase family. Cu cation serves as cofactor.

The protein resides in the secreted. The protein localises to the extracellular space. It is found in the apoplast. It carries out the reaction 4 hydroquinone + O2 = 4 benzosemiquinone + 2 H2O. In terms of biological role, lignin degradation and detoxification of lignin-derived products. This Oryza sativa subsp. japonica (Rice) protein is Laccase-4 (LAC4).